We begin with the raw amino-acid sequence, 699 residues long: Elongation factor G (699 aa).

In terms of domain architecture, tr-type G spans 8-288 (EDYRNFGIMA…AVVDYLPSPL (281 aa)). Residues 17-24 (AHIDAGKT), 86-90 (DTPGH), and 140-143 (NKMD) each bind GTP.

The protein belongs to the TRAFAC class translation factor GTPase superfamily. Classic translation factor GTPase family. EF-G/EF-2 subfamily.

The protein localises to the cytoplasm. In terms of biological role, catalyzes the GTP-dependent ribosomal translocation step during translation elongation. During this step, the ribosome changes from the pre-translocational (PRE) to the post-translocational (POST) state as the newly formed A-site-bound peptidyl-tRNA and P-site-bound deacylated tRNA move to the P and E sites, respectively. Catalyzes the coordinated movement of the two tRNA molecules, the mRNA and conformational changes in the ribosome. The polypeptide is Elongation factor G (Agrobacterium fabrum (strain C58 / ATCC 33970) (Agrobacterium tumefaciens (strain C58))).